The chain runs to 413 residues: Lipoyl synthase, mitochondrial (413 aa).

The transit peptide at 1-33 (MAAATNRFRALYSSSRVATPQAGSASYLSYRGY) directs the protein to the mitochondrion. Residues C133, C138, C144, C164, C168, C171, and S379 each coordinate [4Fe-4S] cluster. The region spanning 147–368 (GGDKAAATAT…RQRALDMGFL (222 aa)) is the Radical SAM core domain.

This sequence belongs to the radical SAM superfamily. Lipoyl synthase family. [4Fe-4S] cluster serves as cofactor.

It localises to the mitochondrion. The enzyme catalyses [[Fe-S] cluster scaffold protein carrying a second [4Fe-4S](2+) cluster] + N(6)-octanoyl-L-lysyl-[protein] + 2 oxidized [2Fe-2S]-[ferredoxin] + 2 S-adenosyl-L-methionine + 4 H(+) = [[Fe-S] cluster scaffold protein] + N(6)-[(R)-dihydrolipoyl]-L-lysyl-[protein] + 4 Fe(3+) + 2 hydrogen sulfide + 2 5'-deoxyadenosine + 2 L-methionine + 2 reduced [2Fe-2S]-[ferredoxin]. Its pathway is protein modification; protein lipoylation via endogenous pathway; protein N(6)-(lipoyl)lysine from octanoyl-[acyl-carrier-protein]: step 2/2. Functionally, catalyzes the radical-mediated insertion of two sulfur atoms into the C-6 and C-8 positions of the octanoyl moiety bound to the lipoyl domains of lipoate-dependent enzymes, thereby converting the octanoylated domains into lipoylated derivatives. This Emericella nidulans (strain FGSC A4 / ATCC 38163 / CBS 112.46 / NRRL 194 / M139) (Aspergillus nidulans) protein is Lipoyl synthase, mitochondrial.